A 64-amino-acid polypeptide reads, in one-letter code: Prokaryotic ubiquitin-like protein UBact (64 aa).

The tract at residues 1–64 is disordered; sequence MFNGEEVILF…SERYRQRTGE (64 aa). The span at 22-64 shows a compositional bias: basic and acidic residues; it reads REIHKDAPAPKRPETKKTGDRLMDRMKKVDPNQSERYRQRTGE. Glu-64 participates in a covalent cross-link: Isoglutamyl lysine isopeptide (Glu-Lys) (interchain with K-? in acceptor proteins).

Belongs to the ubiquitin-like protein UBact family.

Functionally, may function as a protein modifier covalently attached to lysine residues of substrate proteins. This may serve to target the modified proteins for degradation by proteasomes. In Leptospirillum ferriphilum (strain ML-04), this protein is Prokaryotic ubiquitin-like protein UBact.